The chain runs to 118 residues: Vitelline coat lysin (118 aa).

The polypeptide is Vitelline coat lysin (Tegula pfeifferi (Pfeiffer's top shell)).